Reading from the N-terminus, the 157-residue chain is MATTIDARALAAPLVEALLSTAAEQIRAAAPRIAGLPASDAAAVLPADLLPQVRNFLLTMVKEGLSGELNAVAEALQTYLETGRRVIDASVTSAIELSSEQQERITSELRRRYGDVHVTYHVDPTLIGGLIIRVGDQVLDNSLRARLSAVQRALQAS.

Belongs to the ATPase delta chain family. In terms of assembly, F-type ATPases have 2 components, F(1) - the catalytic core - and F(0) - the membrane proton channel. F(1) has five subunits: alpha(3), beta(3), gamma(1), delta(1), epsilon(1). F(0) has three main subunits: a(1), b(2) and c(10-14). The alpha and beta chains form an alternating ring which encloses part of the gamma chain. F(1) is attached to F(0) by a central stalk formed by the gamma and epsilon chains, while a peripheral stalk is formed by the delta and b chains.

It is found in the cell membrane. Functionally, f(1)F(0) ATP synthase produces ATP from ADP in the presence of a proton or sodium gradient. F-type ATPases consist of two structural domains, F(1) containing the extramembraneous catalytic core and F(0) containing the membrane proton channel, linked together by a central stalk and a peripheral stalk. During catalysis, ATP synthesis in the catalytic domain of F(1) is coupled via a rotary mechanism of the central stalk subunits to proton translocation. Its function is as follows. This protein is part of the stalk that links CF(0) to CF(1). It either transmits conformational changes from CF(0) to CF(1) or is implicated in proton conduction. This Chloroflexus aggregans (strain MD-66 / DSM 9485) protein is ATP synthase subunit delta.